The following is an 87-amino-acid chain: MKKNIHPDYHPVVFKDASTGHQFLTRSTATSDRTVEWEDGNEYPLIVVDVTSESHPFWTGAQRVMDTAGRVEKFQRRYGNRLRRAKK.

The protein belongs to the bacterial ribosomal protein bL31 family. Type B subfamily. Part of the 50S ribosomal subunit.

The protein is Large ribosomal subunit protein bL31B of Corynebacterium kroppenstedtii (strain DSM 44385 / JCM 11950 / CIP 105744 / CCUG 35717).